Consider the following 199-residue polypeptide: NAD(P)H dehydrogenase (quinone) (199 aa).

The Flavodoxin-like domain maps to 4–190 (VLVLYYSTYG…AGARHQGELV (187 aa)). Residues 10–15 (STYGHL) and 78–80 (TRF) each bind FMN. Y12 serves as a coordination point for NAD(+). W98 contributes to the substrate binding site. FMN-binding positions include 113-119 (STATQHG) and H134.

This sequence belongs to the WrbA family. FMN serves as cofactor.

It catalyses the reaction a quinone + NADH + H(+) = a quinol + NAD(+). The enzyme catalyses a quinone + NADPH + H(+) = a quinol + NADP(+). The chain is NAD(P)H dehydrogenase (quinone) from Azorhizobium caulinodans (strain ATCC 43989 / DSM 5975 / JCM 20966 / LMG 6465 / NBRC 14845 / NCIMB 13405 / ORS 571).